The following is a 974-amino-acid chain: Leucine-rich repeat receptor-like kinase protein SUNN (974 aa).

An N-terminal signal peptide occupies residues 1–20 (MKNITCYLLLLCMLFTTCYS). 4 N-linked (GlcNAc...) asparagine glycosylation sites follow: Asn-75, Asn-104, Asn-123, and Asn-136. LRR repeat units follow at residues 92–116 (LNML…LSKL), 117–141 (TSLR…TFGM), 143–165 (KLEA…IVSL), 166–188 (MKLK…SYSE), 189–213 (FQKL…LSKL), 238–262 (IKSL…LGNL), 263–286 (ENLD…LSSM), 288–309 (SLMS…TFSK), 310–334 (LKNL…IGDL), 335–358 (PNLE…LGSN), 360–382 (KFIY…LCKS), 383–406 (KKLK…IGPC), 407–430 (KSLE…IFQL), 431–454 (PSVQ…ISGN), 456–477 (LGNL…MKNL), 478–501 (RSLQ…VFAL), 503–525 (VLTR…VTQC), 527–549 (SLTA…MKNL), 550–573 (KVLS…IRFM), and 574–598 (TSLT…QFLV). Residues Asn-250 and Asn-274 are each glycosylated (N-linked (GlcNAc...) asparagine). N-linked (GlcNAc...) asparagine glycans are attached at residues Asn-312 and Asn-346. N-linked (GlcNAc...) asparagine glycans are attached at residues Asn-508 and Asn-513. 2 N-linked (GlcNAc...) asparagine glycosylation sites follow: Asn-556 and Asn-585. Residues 635 to 655 (VVIAIVFATAVLMVIVTLHMM) form a helical membrane-spanning segment. The Protein kinase domain maps to 685–972 (LKEENIIGKG…PPHSTSHNLI (288 aa)). Residues 691–699 (IGKGGAGIV) and Lys-713 contribute to the ATP site. Asp-810 functions as the Proton acceptor in the catalytic mechanism.

This sequence belongs to the protein kinase superfamily. Ser/Thr protein kinase family. In terms of tissue distribution, expressed in roots and shoots. Expressed in the vasculature of leaves, petioles, stems and roots.

It localises to the cell membrane. The catalysed reaction is L-seryl-[protein] + ATP = O-phospho-L-seryl-[protein] + ADP + H(+). It catalyses the reaction L-threonyl-[protein] + ATP = O-phospho-L-threonyl-[protein] + ADP + H(+). LRR receptor kinase involved in the regulation of root growth and root nodule organogenesis. Involved in long distance nodulation signaling events. Involved in the autoregulation of nodulation (AON), a long distance systemic signaling from root to shoot and back again, which allows legumes to limit the number of root nodules formed based on available nitrogen and previous rhizobial colonization. Acts from shoot to root to control AON. Interacts with CLE12 and CLE13 signaling to control nodule numbers. Required for the modulation of shoot-to-root auxin transport in response to altered nitrogen tissue concentrations and in the absence of rhizobia. Shoot-to-root auxin transport influences lateral root density and length. Involved in the regulation of root colonization by arbuscular mycorrhizal (AM) fungi. Interacts with CLE33 and CL53 signaling to repress strigolactone biosynthetic genes and strigolactone content in the roots, and consequently reduces the promotion of further colonization by AM fungi. The polypeptide is Leucine-rich repeat receptor-like kinase protein SUNN (Medicago truncatula (Barrel medic)).